A 672-amino-acid chain; its full sequence is MRSIRSFANDDRHVMVKHSTIYPSPEELEAVQNMVSTVECALKHVSDWLDETNKGTKTEGETEVKKDEAGENYSKDQGGRTLCGVMRIGLVAKGLLIKDDMDLELVLMCKDKPTETLLNTVKDNLPIQIQKLTEEKYQVEQCVNEASIIIRNTKEPTLTLKVILTSPLIRDELEKKDGENVSMKDPPDLLDRQKCLNALASLRHAKWFQARANGLKSCVIVLRILRDLCNRVPTWAPLKGWPLELICEKSIGTCNRPLGAGEALRRVMECLASGILLPGGPGLHDPCERDPTDALSYMTIQQKEDITHSAQHALRLSAFGQIYKVLEMDPLPSSKPFQKYSWSVTDKEGAGSSALKRPFEDGLGDDKDPNKKMKRNLRKILDSKAIDLMNALMRLNQIRPGLQYKLLSQSGPVHAPVFTMSVDVDGTTYEASGPSKKTAKLHVAVKVLQAMGYPTGFDADIECMSSDEKSDNESKNETVSSNSSNNTGNSTTETSSTLEVRTQGPILTASGKNPVMELNEKRRGLKYELISETGGSHDKRFVMEVEVDGQKFRGAGPNKKVAKASAALAALEKLFSGPNAANNKKKKIIPQAKGVVNTAVSAAVQAVRGRGRGTLTRGAFVGAAAAPGYIAPGYGTPYGYSTAAPAYGLPKRMVLLPVMKFPTYPVPHYSFF.

One can recognise a DZF domain in the interval 5–363; sequence RSFANDDRHV…ALKRPFEDGL (359 aa). Disordered regions lie at residues 52 to 73 and 349 to 371; these read TNKG…GENY and GAGS…DPNK. Residues 357–371 show a composition bias toward basic and acidic residues; the sequence is RPFEDGLGDDKDPNK. In terms of domain architecture, DRBM 1 spans 387–453; it reads DLMNALMRLN…AVKVLQAMGY (67 aa). The segment covering 466-476 has biased composition (basic and acidic residues); the sequence is SDEKSDNESKN. Residues 466 to 499 form a disordered region; the sequence is SDEKSDNESKNETVSSNSSNNTGNSTTETSSTLE. Residues 477–497 are compositionally biased toward low complexity; that stretch reads ETVSSNSSNNTGNSTTETSST. Positions 510 to 576 constitute a DRBM 2 domain; that stretch reads SGKNPVMELN…ALAALEKLFS (67 aa). 2 positions are modified to asymmetric dimethylarginine: Arg612 and Arg617.

As to quaternary structure, interacts with EIF2AK2. Associates with microtubules; it is unsure whether such interaction is direct or indirect.

Its subcellular location is the cytoplasm. Its function is as follows. Involved in spermatogenesis and sperm function. Plays a role in regulation of cell growth. Binds to double-stranded DNA and RNA. Binds most efficiently to poly(I:C) RNA than to poly(dI:dC) DNA. Binds also to single-stranded poly(G) RNA. Binds non-specifically to the mRNA PRM1 3'-UTR and adenovirus VA RNA. This Pongo abelii (Sumatran orangutan) protein is Spermatid perinuclear RNA-binding protein (STRBP).